We begin with the raw amino-acid sequence, 615 residues long: DNA mismatch repair protein MutL (615 aa).

The tract at residues 362–397 (HFAEPAVREPVAPRYSPAPASGGRPAASWPNAQPGY) is disordered. A compositionally biased stretch (low complexity) spans 378–391 (PAPASGGRPAASWP).

This sequence belongs to the DNA mismatch repair MutL/HexB family.

Its function is as follows. This protein is involved in the repair of mismatches in DNA. It is required for dam-dependent methyl-directed DNA mismatch repair. May act as a 'molecular matchmaker', a protein that promotes the formation of a stable complex between two or more DNA-binding proteins in an ATP-dependent manner without itself being part of a final effector complex. This Escherichia fergusonii (strain ATCC 35469 / DSM 13698 / CCUG 18766 / IAM 14443 / JCM 21226 / LMG 7866 / NBRC 102419 / NCTC 12128 / CDC 0568-73) protein is DNA mismatch repair protein MutL.